We begin with the raw amino-acid sequence, 252 residues long: Chitooligosaccharide deacetylase (252 aa).

Mg(2+)-binding residues include His-61 and His-125.

Belongs to the YdjC deacetylase family. ChbG subfamily. Homodimer. It depends on Mg(2+) as a cofactor.

The protein resides in the cytoplasm. It carries out the reaction N,N'-diacetylchitobiose + H2O = N-acetyl-beta-D-glucosaminyl-(1-&gt;4)-D-glucosamine + acetate. It catalyses the reaction diacetylchitobiose-6'-phosphate + H2O = N'-monoacetylchitobiose-6'-phosphate + acetate. Its pathway is glycan degradation; chitin degradation. In terms of biological role, involved in the degradation of chitin. ChbG is essential for growth on the acetylated chitooligosaccharides chitobiose and chitotriose but is dispensable for growth on cellobiose and chitosan dimer, the deacetylated form of chitobiose. Deacetylation of chitobiose-6-P and chitotriose-6-P is necessary for both the activation of the chb promoter by the regulatory protein ChbR and the hydrolysis of phosphorylated beta-glucosides by the phospho-beta-glucosidase ChbF. Catalyzes the removal of only one acetyl group from chitobiose-6-P to yield monoacetylchitobiose-6-P, the inducer of ChbR and the substrate of ChbF. The chain is Chitooligosaccharide deacetylase from Salmonella enteritidis PT4 (strain P125109).